The following is a 396-amino-acid chain: NADH-quinone oxidoreductase subunit D (396 aa).

Belongs to the complex I 49 kDa subunit family. NDH-1 is composed of 14 different subunits. Subunits NuoB, C, D, E, F, and G constitute the peripheral sector of the complex.

The protein resides in the cell inner membrane. It catalyses the reaction a quinone + NADH + 5 H(+)(in) = a quinol + NAD(+) + 4 H(+)(out). Its function is as follows. NDH-1 shuttles electrons from NADH, via FMN and iron-sulfur (Fe-S) centers, to quinones in the respiratory chain. The immediate electron acceptor for the enzyme in this species is believed to be ubiquinone. Couples the redox reaction to proton translocation (for every two electrons transferred, four hydrogen ions are translocated across the cytoplasmic membrane), and thus conserves the redox energy in a proton gradient. This Rhodopseudomonas palustris (strain BisA53) protein is NADH-quinone oxidoreductase subunit D.